The chain runs to 291 residues: U3 small nucleolar ribonucleoprotein protein IMP4 (291 aa).

The Brix domain maps to 83 to 264; that stretch reads PKVMITTSRD…LYMIRLGTLE (182 aa).

In terms of assembly, part of the small subunit (SSU) processome, composed of more than 70 proteins and the RNA chaperone small nucleolar RNA (snoRNA) U3. Component of a heterotrimeric complex containing IMP3, IMP4 and MPHOSPH10. Interacts with MPHOSPH10.

The protein localises to the nucleus. It localises to the nucleolus. Its function is as follows. Component of the 60-80S U3 small nucleolar ribonucleoprotein (U3 snoRNP). Required for the early cleavages during pre-18S ribosomal RNA processing. Part of the small subunit (SSU) processome, first precursor of the small eukaryotic ribosomal subunit. During the assembly of the SSU processome in the nucleolus, many ribosome biogenesis factors, an RNA chaperone and ribosomal proteins associate with the nascent pre-rRNA and work in concert to generate RNA folding, modifications, rearrangements and cleavage as well as targeted degradation of pre-ribosomal RNA by the RNA exosome. This is U3 small nucleolar ribonucleoprotein protein IMP4 from Homo sapiens (Human).